An 806-amino-acid polypeptide reads, in one-letter code: Transitional endoplasmic reticulum ATPase (806 aa).

Alanine 2 carries the post-translational modification N-acetylalanine. A phosphoserine mark is found at serine 3 and serine 7. Lysine 8 is covalently cross-linked (Glycyl lysine isopeptide (Lys-Gly) (interchain with G-Cter in SUMO2)). Residue serine 13 is modified to Phosphoserine. Residue lysine 18 forms a Glycyl lysine isopeptide (Lys-Gly) (interchain with G-Cter in SUMO2) linkage. A Phosphoserine modification is found at serine 37. 247 to 253 lines the ATP pocket; it reads PGTGKTL. Lysine 315 carries the N6,N6,N6-trimethyllysine; by VCPKMT modification. 2 residues coordinate ATP: asparagine 348 and histidine 384. Phosphothreonine is present on threonine 436. A Phosphoserine modification is found at serine 462. N6-acetyllysine is present on residues lysine 502 and lysine 505. 521–526 is a binding site for ATP; it reads GCGKTL. N6-acetyllysine; alternate is present on lysine 668. Lysine 668 bears the N6-succinyllysine; alternate mark. Serine 702 bears the Phosphoserine mark. Residues 708–727 form a disordered region; it reads RRERERQTNPSAMEVEEDDP. Residue lysine 754 is modified to N6-acetyllysine. The interval 768–806 is disordered; the sequence is FGSFRFPSGNQGGAGPSQGSGGGTGGNVYTEDNDDDLYG. Residues serine 770, serine 775, and serine 787 each carry the phosphoserine modification. Over residues 777–793 the composition is skewed to gly residues; the sequence is NQGGAGPSQGSGGGTGG. The segment at 797 to 806 is interaction with UBXN6; sequence TEDNDDDLYG. Residues 802–806 carry the PIM motif motif; the sequence is DDLYG. Tyrosine 805 is subject to Phosphotyrosine.

The protein belongs to the AAA ATPase family. In terms of assembly, homohexamer. Forms a ring-shaped particle of 12.5 nm diameter, that displays 6-fold radial symmetry. Interacts with NSFL1C-like protein p37; the complex has membrane fusion activity and is required for Golgi and endoplasmic reticulum biogenesis. Interacts with RHBDD1 (via C-terminal domain). Interacts with SELENOS and SYVN1, as well as with DERL1 (via SHP-box motif), DERL2 and DERL3; which probably transfer misfolded proteins from the ER to VCP. Interacts with SVIP and DERL1. Component of a complex required to couple retrotranslocation, ubiquitination and deglycosylation composed of NGLY1, SAKS1, AMFR, VCP and RAD23B. Part of a complex composed of STUB1/CHIP, VCP/p97, CHRNA3, and UBXN2A that modulates the ubiquitination and endoplasmic reticulum-associated degradation (ERAD) of CHRNA3. Within the complex UBXN2A acts as a scaffold protein required for the interaction of CHRNA3 with VCP/p97, this interaction also inhibits CHRNA3 ubiquitination by STUB1/CHIP and subsequently ERAD. Interacts with UBXN2A (via UBX domain); the interaction is required for the interaction of CHRNA3 in the STUB1-VCP-UBXN2A complex. Directly interacts with UBXN4 and RNF19A. Interacts with CASR. Interacts with UBE4B and YOD1. Interacts with clathrin. Interacts with RNF103. Interacts with TRIM13 and TRIM21. Component of a VCP/p97-AMFR/gp78 complex that participates in the final step of the endoplasmic reticulum-associated degradation (ERAD) of HMGCR. Interacts directly with AMFR/gp78 (via its VIM). Interacts with SPRTN; leading to recruitment to stalled replication forks. Part of a ternary complex containing STX5A, NSFL1C and VCP. NSFL1C forms a homotrimer that binds to one end of a VCP homohexamer. The complex binds to membranes enriched in phosphatidylethanolamine-containing lipids and promotes Golgi membrane fusion. Binds to a heterodimer of NPLOC4 and UFD1, binding to this heterodimer inhibits Golgi-membrane fusion. Interaction with VCIP135 leads to dissociation of the complex via ATP hydrolysis by VCP. Part of a ternary complex containing NPLOC4, UFD1 and VCP. Interacts with WASHC5. Interacts with UBOX5. Interacts (via N-terminus) with UBXN7, UBXN8, and probably several other UBX domain-containing proteins (via UBX domains); the interactions are mutually exclusive with VIM-dependent interactions such as those with AMFR and SELENOS. Forms a complex with UBQLN1 and UBXN4. Interacts (via the PIM motif) with RNF31 (via the PUB domain). Interacts with RIGI and RNF125; interaction takes place when RIGI is ubiquitinated via 'Lys-63'-linked ubiquitin on its CARD domains, leading to recruit RNF125 and promote ubiquitination and degradation of RIGI. Interacts with BAG6. Interacts with UBXN10. Interacts with UBXN6; the interaction with UBXN6 is direct and competitive with UFD1. Forms a ternary complex with CAV1 and UBXN6. Interacts with PLAA, UBXN6 and YOD1; may form a complex involved in macroautophagy. Interacts with ANKZF1. Interacts with ubiquitin-binding protein FAF1. Interacts with ZFAND2B (via VIM motif); the interaction is direct. Interacts with ZFAND1 (via its ubiquitin-like region); this interaction occurs in an arsenite-dependent manner. Interacts with CCDC47. Interacts with LMBR1L and UBAC2. Interacts with ATXN3. Interacts with TEX264; bridging VCP to covalent DNA-protein cross-links (DPCs). Post-translationally, phosphorylated by tyrosine kinases in response to T-cell antigen receptor activation. Phosphorylated in mitotic cells. ISGylated. In terms of processing, methylation at Lys-315 catalyzed by VCPKMT is increased in the presence of ASPSCR1. Lys-315 methylation may decrease ATPase activity.

Its subcellular location is the cytoplasm. It is found in the cytosol. It localises to the endoplasmic reticulum. The protein resides in the nucleus. The protein localises to the stress granule. The enzyme catalyses ATP + H2O = ADP + phosphate + H(+). Its function is as follows. Necessary for the fragmentation of Golgi stacks during mitosis and for their reassembly after mitosis. Involved in the formation of the transitional endoplasmic reticulum (tER). The transfer of membranes from the endoplasmic reticulum to the Golgi apparatus occurs via 50-70 nm transition vesicles which derive from part-rough, part-smooth transitional elements of the endoplasmic reticulum (tER). Vesicle budding from the tER is an ATP-dependent process. The ternary complex containing UFD1, VCP and NPLOC4 binds ubiquitinated proteins and is necessary for the export of misfolded proteins from the ER to the cytoplasm, where they are degraded by the proteasome. The NPLOC4-UFD1-VCP complex regulates spindle disassembly at the end of mitosis and is necessary for the formation of a closed nuclear envelope. Regulates E3 ubiquitin-protein ligase activity of RNF19A. Component of the VCP/p97-AMFR/gp78 complex that participates in the final step of the sterol-mediated ubiquitination and endoplasmic reticulum-associated degradation (ERAD) of HMGCR. Mediates the endoplasmic reticulum-associated degradation of CHRNA3 in cortical neurons as part of the STUB1-VCP-UBXN2A complex. Involved in endoplasmic reticulum stress-induced pre-emptive quality control, a mechanism that selectively attenuates the translocation of newly synthesized proteins into the endoplasmic reticulum and reroutes them to the cytosol for proteasomal degradation. Involved in clearance process by mediating G3BP1 extraction from stress granules. Also involved in DNA damage response: recruited to double-strand breaks (DSBs) sites in a RNF8- and RNF168-dependent manner and promotes the recruitment of TP53BP1 at DNA damage sites. Recruited to stalled replication forks by SPRTN: may act by mediating extraction of DNA polymerase eta (POLH) to prevent excessive translesion DNA synthesis and limit the incidence of mutations induced by DNA damage. Together with SPRTN metalloprotease, involved in the repair of covalent DNA-protein cross-links (DPCs) during DNA synthesis. Involved in interstrand cross-link repair in response to replication stress by mediating unloading of the ubiquitinated CMG helicase complex. Mediates extraction of PARP1 trapped to chromatin: recognizes and binds ubiquitinated PARP1 and promotes its removal. Required for cytoplasmic retrotranslocation of stressed/damaged mitochondrial outer-membrane proteins and their subsequent proteasomal degradation. Essential for the maturation of ubiquitin-containing autophagosomes and the clearance of ubiquitinated protein by autophagy. Acts as a negative regulator of type I interferon production by interacting with RIGI: interaction takes place when RIGI is ubiquitinated via 'Lys-63'-linked ubiquitin on its CARD domains, leading to recruit RNF125 and promote ubiquitination and degradation of RIGI. May play a role in the ubiquitin-dependent sorting of membrane proteins to lysosomes where they undergo degradation. May more particularly play a role in caveolins sorting in cells. By controlling the steady-state expression of the IGF1R receptor, indirectly regulates the insulin-like growth factor receptor signaling pathway. This chain is Transitional endoplasmic reticulum ATPase (Vcp), found in Rattus norvegicus (Rat).